A 544-amino-acid polypeptide reads, in one-letter code: Flagellar hook-associated protein 1 (544 aa).

Belongs to the flagella basal body rod proteins family.

It is found in the secreted. The protein localises to the bacterial flagellum. The polypeptide is Flagellar hook-associated protein 1 (flgK) (Buchnera aphidicola subsp. Schizaphis graminum (strain Sg)).